The sequence spans 118 residues: Large ribosomal subunit protein bL20 (118 aa).

This sequence belongs to the bacterial ribosomal protein bL20 family.

In terms of biological role, binds directly to 23S ribosomal RNA and is necessary for the in vitro assembly process of the 50S ribosomal subunit. It is not involved in the protein synthesizing functions of that subunit. The sequence is that of Large ribosomal subunit protein bL20 from Fervidobacterium nodosum (strain ATCC 35602 / DSM 5306 / Rt17-B1).